The primary structure comprises 442 residues: MAPLNSQAAGEEESNYQCRFPRFMHLSWKRPYLTRVFDLAVIQKKQKKEMSDSEEKKCNDDSKQPVLVLDLLRSILERLSFVDFHRGRCISLEWYSASESCLAVKNPTSPWIILFPSENVESKNDSCKLYNPRDHSSYIVRDLGFDLARSRCLASSGSWFLMLDHRTDFHILNLFTRVRIPLPPLESTGDGNVFKRVYENVSDGSCIKIDNAVLWVDEKRRDYLVVWNISRLFGYHKKGDENYSWKVFKPLKKNDCCIDMAFKENKLYVLSVTRKVTVYDFSGGDSPVKCATFPSLRFRNGYSYNTQGCHYKVAVTLSGEVLIIVAKVEPYPRVECFFAVYKMDHNSSGYERISLGGEALLLDLGITVEANCMKNCIYFSNDQFHRYNGKSLCDDSNKNGICVYHIRSRYVVQVFEHLTASSKIAFKDARSFFPIFGGKWLL.

One can recognise an F-box domain in the interval serine 62–serine 109. The short motif at histidine 236–tyrosine 243 is the Nuclear localization signal element.

In terms of assembly, interacts with ASK7/BIN2/SK21.

The protein resides in the cytoplasm. It is found in the nucleus. It localises to the nucleolus. Component of SCF(ASK-cullin-F-box) E3 ubiquitin ligase complexes, which may mediate the ubiquitination and subsequent proteasomal degradation of target proteins. Required for brassinosteroid (BR) signal transduction. Mediates ASK7/BIN2/SK21 inactivation both by competing with substrate binding (e.g. BZR1) and by promoting its ubiquitination and subsequent proteasomal degradation. The protein is F-box protein KIB2 of Arabidopsis thaliana (Mouse-ear cress).